We begin with the raw amino-acid sequence, 81 residues long: Cytotoxin (81 aa).

The N-terminal stretch at Met-1–Thr-21 is a signal peptide. Cystine bridges form between Cys-24–Cys-42, Cys-35–Cys-59, Cys-63–Cys-74, and Cys-75–Cys-80.

It belongs to the three-finger toxin family. Short-chain subfamily. Type IA cytotoxin sub-subfamily. Monomer in solution; Homodimer and oligomer in the presence of negatively charged lipids forming a pore with a size ranging between 20 and 30 Angstroms. As to expression, expressed by the venom gland.

The protein resides in the secreted. It localises to the target cell membrane. Functionally, shows cytolytic activity on many different cells by forming pore in lipid membranes. In vivo, increases heart rate or kills the animal by cardiac arrest. In addition, it binds to heparin with high affinity, interacts with Kv channel-interacting protein 1 (KCNIP1) in a calcium-independent manner, and binds to integrin alpha-V/beta-3 (ITGAV/ITGB3) with moderate affinity. The chain is Cytotoxin from Naja sputatrix (Malayan spitting cobra).